The chain runs to 210 residues: Probable GTP-binding protein EngB (210 aa).

One can recognise an EngB-type G domain in the interval 25–199; sequence CGIEVAFAGR…RQKLDSWFSE (175 aa). Residues 33–40, 60–64, 78–81, 145–148, and 178–180 contribute to the GTP site; these read GRSNAGKS, GRTQL, DLPG, TKAD, and FSS. Residues Ser40 and Thr62 each coordinate Mg(2+).

Belongs to the TRAFAC class TrmE-Era-EngA-EngB-Septin-like GTPase superfamily. EngB GTPase family. The cofactor is Mg(2+).

Functionally, necessary for normal cell division and for the maintenance of normal septation. The chain is Probable GTP-binding protein EngB from Salmonella agona (strain SL483).